Consider the following 262-residue polypeptide: GTP cyclohydrolase FolE2 (262 aa).

Belongs to the GTP cyclohydrolase IV family.

The catalysed reaction is GTP + H2O = 7,8-dihydroneopterin 3'-triphosphate + formate + H(+). It participates in cofactor biosynthesis; 7,8-dihydroneopterin triphosphate biosynthesis; 7,8-dihydroneopterin triphosphate from GTP: step 1/1. Its function is as follows. Converts GTP to 7,8-dihydroneopterin triphosphate. The protein is GTP cyclohydrolase FolE2 of Dichelobacter nodosus (strain VCS1703A).